Here is a 462-residue protein sequence, read N- to C-terminus: Signal recognition particle protein (462 aa).

Residues 107–114 (GLQGAGKT), 190–194 (DTAGR), and 248–251 (TKVD) contribute to the GTP site.

Belongs to the GTP-binding SRP family. SRP54 subfamily. Part of the signal recognition particle protein translocation system, which is composed of SRP and FtsY. SRP is a ribonucleoprotein composed of Ffh and a 4.5S RNA molecule.

It is found in the cytoplasm. The catalysed reaction is GTP + H2O = GDP + phosphate + H(+). Involved in targeting and insertion of nascent membrane proteins into the cytoplasmic membrane. Binds to the hydrophobic signal sequence of the ribosome-nascent chain (RNC) as it emerges from the ribosomes. The SRP-RNC complex is then targeted to the cytoplasmic membrane where it interacts with the SRP receptor FtsY. Interaction with FtsY leads to the transfer of the RNC complex to the Sec translocase for insertion into the membrane, the hydrolysis of GTP by both Ffh and FtsY, and the dissociation of the SRP-FtsY complex into the individual components. The polypeptide is Signal recognition particle protein (Haemophilus influenzae (strain ATCC 51907 / DSM 11121 / KW20 / Rd)).